The following is a 213-amino-acid chain: Phosphatidylserine decarboxylase proenzyme (213 aa).

Residue Ser-182 is the Schiff-base intermediate with substrate; via pyruvic acid of the active site. At Ser-182 the chain carries Pyruvic acid (Ser); by autocatalysis.

This sequence belongs to the phosphatidylserine decarboxylase family. PSD-A subfamily. Heterodimer of a large membrane-associated beta subunit and a small pyruvoyl-containing alpha subunit. Pyruvate is required as a cofactor. Post-translationally, is synthesized initially as an inactive proenzyme. Formation of the active enzyme involves a self-maturation process in which the active site pyruvoyl group is generated from an internal serine residue via an autocatalytic post-translational modification. Two non-identical subunits are generated from the proenzyme in this reaction, and the pyruvate is formed at the N-terminus of the alpha chain, which is derived from the carboxyl end of the proenzyme. The post-translation cleavage follows an unusual pathway, termed non-hydrolytic serinolysis, in which the side chain hydroxyl group of the serine supplies its oxygen atom to form the C-terminus of the beta chain, while the remainder of the serine residue undergoes an oxidative deamination to produce ammonia and the pyruvoyl prosthetic group on the alpha chain.

The protein localises to the cell membrane. It carries out the reaction a 1,2-diacyl-sn-glycero-3-phospho-L-serine + H(+) = a 1,2-diacyl-sn-glycero-3-phosphoethanolamine + CO2. It functions in the pathway phospholipid metabolism; phosphatidylethanolamine biosynthesis; phosphatidylethanolamine from CDP-diacylglycerol: step 2/2. In terms of biological role, catalyzes the formation of phosphatidylethanolamine (PtdEtn) from phosphatidylserine (PtdSer). The polypeptide is Phosphatidylserine decarboxylase proenzyme (Chlorobium phaeobacteroides (strain BS1)).